The primary structure comprises 314 residues: Mitochondrial thiamine pyrophosphate carrier 1 (314 aa).

The next 6 helical transmembrane spans lie at Val-14–Ala-30, Leu-84–Phe-100, Leu-116–Leu-136, Gly-170–Phe-186, Ser-217–Leu-233, and Gly-285–Trp-302. Solcar repeat units lie at residues Val-14–Tyr-103, Glu-110–Tyr-195, and Glu-210–Tyr-310.

The protein belongs to the mitochondrial carrier (TC 2.A.29) family.

The protein localises to the mitochondrion inner membrane. In terms of biological role, mitochondrial transporter that mediates uptake of thiamine pyrophosphate (ThPP) into mitochondria. The chain is Mitochondrial thiamine pyrophosphate carrier 1 (TPC1) from Saccharomyces cerevisiae (strain YJM789) (Baker's yeast).